A 203-amino-acid chain; its full sequence is ATP-dependent Clp protease proteolytic subunit 2 (203 aa).

Ser-98 acts as the Nucleophile in catalysis. His-123 is an active-site residue.

The protein belongs to the peptidase S14 family. As to quaternary structure, fourteen ClpP subunits assemble into 2 heptameric rings which stack back to back to give a disk-like structure with a central cavity, resembling the structure of eukaryotic proteasomes.

It localises to the cytoplasm. The catalysed reaction is Hydrolysis of proteins to small peptides in the presence of ATP and magnesium. alpha-casein is the usual test substrate. In the absence of ATP, only oligopeptides shorter than five residues are hydrolyzed (such as succinyl-Leu-Tyr-|-NHMec, and Leu-Tyr-Leu-|-Tyr-Trp, in which cleavage of the -Tyr-|-Leu- and -Tyr-|-Trp bonds also occurs).. In terms of biological role, cleaves peptides in various proteins in a process that requires ATP hydrolysis. Has a chymotrypsin-like activity. Plays a major role in the degradation of misfolded proteins. The polypeptide is ATP-dependent Clp protease proteolytic subunit 2 (Chlamydia muridarum (strain MoPn / Nigg)).